The following is a 533-amino-acid chain: Death domain-containing ATP nucleosidase (533 aa).

The tract at residues Met-1–Ser-262 is death domain. Residues Ser-184–Ser-248 are disordered. The span at Pro-218–Thr-227 shows a compositional bias: polar residues. The segment covering Ser-236–Ser-248 has biased composition (low complexity). A purine nucleoside phosphorylase domain region spans residues Asp-263–Met-533.

The catalysed reaction is ATP + H2O = D-ribose 5-triphosphate + adenine. The enzyme catalyses dATP + H2O = 2-deoxyribose 5-triphosphate + adenine. In terms of biological role, the C-terminal purine nucleoside phosphorylase (PNP) domain cleaves the N-glycosidic bond of ATP, and to a lesser extent dATP, to release adenine and a sugar triphosphate; has weak activity on ADP and AMP and no activity on dADP, dAMP, adenosine, deoxyadenosine or other (d)NTPs. This is Death domain-containing ATP nucleosidase (109585858) from Amphimedon queenslandica (Sponge).